Here is a 110-residue protein sequence, read N- to C-terminus: MDITNANSVVSLMNSVLAPSSKVGSLDGSAGDNAKVSIDFGAVLKSSLDKVDASQQKAETLSRSFELGNNDVDLHDVMLSLQKANIDLQTAVQVRNKLVSAYQNIMSMSI.

The protein belongs to the FliE family.

The protein localises to the bacterial flagellum basal body. In Ralstonia nicotianae (strain ATCC BAA-1114 / GMI1000) (Ralstonia solanacearum), this protein is Flagellar hook-basal body complex protein FliE.